The following is a 934-amino-acid chain: MKIKHYPGKAVDASLSLEGSSAMGALYEANWLRAANQPAAPATTGTKLSRQSSSAGSSFLIEGISALSKYQMTLENIRQLELQSRDKRIASTIKELSGYRPSALQHHQQQQMHNVWVAEDQDQEHEELEDASEGKEKLASIQEPPAVNHYVLDPTERPRVPRPRQQFSVKPPSLRRSQTMSQPPSYATLRSPPKIKENLSKSSSAYSTFSSAAEDSQDQVVICQQPQRLMAPPPREPPPEPPKRVSKPLSRSQTSVQRYATVRMPNQTTSFSRSVVRSRDSTASQRRLSLEQAIEGLKLEGEKAVRQKSPQISPAASSNGSSKDLNGEGFCIPRPRLIVPVHTYARRRRTGNLKEQSSGGQEEEAEKGKGWKDFYVLSQDRHSSFYINRIGQNYDYDYPINFNIFSPDGRVEVSREGKYLSTLSGAKVLGELAILYNCQRTATITAITECNLWAIERQCFQTIMMRTGLIRQAEYSDFLKSVPIFKDLAEDTLIKISDVLEETHYQRGDYIVRQGARGDTFFIISKGKVRVTIKQQDTQEEKFIRMLGKGDFFGEKALQGDDLRTANIICESADGVSCLVIDRETFNQLISNLDEIKHRYDDEGAMERRKINEEFRDINLTDLRVIATLGVGGFGRVELVQTNGDSSRSFALKQMKKSQIVETRQQQHIMSEKEIMGEANCQFIVKLFKTFKDKKYLYMLMESCLGGELWTILRDKGNFDDSTTRFYTACVVEAFDYLHSRNIIYRDLKPENLLLNERGYVKLVDFGFAKKLQTGRKTWTFCGTPEYVAPEVILNRGHDISADYWSLGVLMFELLTGTPPFTGSDPMRTYNIILKGIDAIEFPRNITRNASNLIKKLCRDNPAERLGYQRGGISEIQKHKWFDGFYWWGLQNCTLEPPIKPAVKSVVDTTNFDDYPPDPEGPPPDDVTGWDKDF.

Over residues 121-131 (QDQEHEELEDA) the composition is skewed to acidic residues. 2 disordered regions span residues 121–287 (QDQE…SQRR) and 301–327 (GEKAVRQKSPQISPAASSNGSSKDLNG). Over residues 175–185 (RRSQTMSQPPS) the composition is skewed to polar residues. A compositionally biased stretch (low complexity) spans 200–213 (SKSSSAYSTFSSAA). Composition is skewed to polar residues over residues 218–227 (DQVVICQQPQ), 249–258 (LSRSQTSVQR), and 308–324 (KSPQISPAASSNGSSKD). 3',5'-cyclic GMP is bound by residues 430–433 (GELA), 440–441 (RT), Arg545, 554–557 (GEKA), and 564–565 (RT). One can recognise a Protein kinase domain in the interval 623 to 882 (LRVIATLGVG…ISEIQKHKWF (260 aa)). Residues 629–637 (LGVGGFGRV) and Lys653 contribute to the ATP site. The active-site Proton acceptor is the Asp747. Positions 883 to 934 (DGFYWWGLQNCTLEPPIKPAVKSVVDTTNFDDYPPDPEGPPPDDVTGWDKDF) constitute an AGC-kinase C-terminal domain. The tract at residues 910-934 (TNFDDYPPDPEGPPPDDVTGWDKDF) is disordered.

This sequence belongs to the protein kinase superfamily. AGC Ser/Thr protein kinase family. cGMP subfamily.

The enzyme catalyses L-seryl-[protein] + ATP = O-phospho-L-seryl-[protein] + ADP + H(+). It carries out the reaction L-threonyl-[protein] + ATP = O-phospho-L-threonyl-[protein] + ADP + H(+). The polypeptide is cGMP-dependent protein kinase, isozyme 2 forms cD5/T2 (for) (Drosophila melanogaster (Fruit fly)).